Consider the following 408-residue polypeptide: Diguanylate cyclase DgcN (408 aa).

Residues 1–24 are Cytoplasmic-facing; it reads MMDNDNSLNKRPTFKRALRNISMT. A helical membrane pass occupies residues 25–45; it reads SIFITMMLIWLLLSVTSVLTL. The Periplasmic portion of the chain corresponds to 46-52; sequence KQYAQKN. The chain crosses the membrane as a helical span at residues 53 to 73; it reads LALTAATMTYSLEAAVVFADG. Topologically, residues 74-112 are cytoplasmic; that stretch reads PAATETLAALGQQGQFSTAEVRDKQQNILASWHYTRKDP. The chain crosses the membrane as a helical span at residues 113–133; it reads GDTFSNFISHWLFPAPIIQPI. The Periplasmic portion of the chain corresponds to 134-154; that stretch reads RHNGETIGEVRLTARDSSISH. A helical membrane pass occupies residues 155 to 175; it reads FIWFSLAVLTGCILLASGIAI. Over 176-408 the chain is Cytoplasmic; sequence TLTRHLHNGL…KHQRAEKLVR (233 aa). One can recognise an HAMP domain in the interval 183-236; the sequence is NGLVEALKNITDVVHDVRSNRNFSRRVSEERIAEFHRFALDFNSLLDEMEEWQL. Residues 278–408 form the GGDEF domain; the sequence is KTSALLFLDG…KHQRAEKLVR (131 aa). Asp-286 contributes to the Mg(2+) binding site. Substrate contacts are provided by Asn-294, His-299, and Asp-303. A Mg(2+)-binding site is contributed by Asp-329. Asp-329 serves as the catalytic Proton acceptor.

In terms of assembly, homodimer. Interacts with the cell division proteins FtsZ and ZipA. Mg(2+) is required as a cofactor.

The protein localises to the cell inner membrane. The catalysed reaction is 2 GTP = 3',3'-c-di-GMP + 2 diphosphate. It participates in purine metabolism; 3',5'-cyclic di-GMP biosynthesis. Its activity is regulated as follows. Inhibited by YfiR, which prevents relocation to the midcell. A reductive stress signal is required to inactivate YfiR and turn on the DGC activity of DgcN. In terms of biological role, bifunctional protein that catalyzes the synthesis of cyclic-di-GMP (c-di-GMP) in response to reductive stress and then dynamically relocates to the division site to arrest cell division in response to envelope stress. In the presence of high intracellular c-di-GMP levels, and in response to envelope stress, interacts with cell division proteins and halts cell division, without disassembling the Z ring, but by blocking its further progress toward cytokinesis. Part of a network that regulates cell motility by altering levels of c-di-GMP. This is Diguanylate cyclase DgcN from Escherichia coli (strain K12).